The primary structure comprises 360 residues: MAQLSLQHIQKIYDNQVHVVKDFNLEIADKEFIVFVGPSGCGKSTTLRMIAGLEEISGGDLLIDGKRMNDVPAKARNIAMVFQNYALYPHMTVYDNMAFGLKMQKIAKEVIDERVNWAAQILGLREYLKRKPGALSGGQRQRVALGRAIVREAGVFLMDEPLSNLDAKLRVQMRAEISKLHQKLNTTMIYVTHDQTEAMTMATRIVIMKDGIVQQVGAPKTVYNQPANMFVAGFIGSPAMNFIRGTIDGDKFVTETLKLTIPEEKLAVLKTQESLHKPIVMGMRPEDIHPDAQEENNISAKISVVELTGAEFMLYTTVGGHELVVRAGALNDYHAGENITIHFDMTKCHFFDAETEIAIR.

Residues 4-235 (LSLQHIQKIY…PANMFVAGFI (232 aa)) enclose the ABC transporter domain. 37–44 (GPSGCGKS) lines the ATP pocket.

It belongs to the ABC transporter superfamily.

This is an uncharacterized protein from Escherichia coli O157:H7.